We begin with the raw amino-acid sequence, 386 residues long: Acetate kinase (386 aa).

Mg(2+) is bound at residue Asn-7. ATP is bound at residue Lys-14. Arg-78 contributes to the substrate binding site. Asp-135 serves as the catalytic Proton donor/acceptor. ATP contacts are provided by residues 195-199, 268-270, and 316-320; these read HLGNG, DMR, and GIGEN. Glu-370 is a binding site for Mg(2+).

This sequence belongs to the acetokinase family. In terms of assembly, homodimer. Requires Mg(2+) as cofactor. The cofactor is Mn(2+).

The protein localises to the cytoplasm. It catalyses the reaction acetate + ATP = acetyl phosphate + ADP. It functions in the pathway metabolic intermediate biosynthesis; acetyl-CoA biosynthesis; acetyl-CoA from acetate: step 1/2. Catalyzes the formation of acetyl phosphate from acetate and ATP. Can also catalyze the reverse reaction. The protein is Acetate kinase of Pseudarthrobacter chlorophenolicus (strain ATCC 700700 / DSM 12829 / CIP 107037 / JCM 12360 / KCTC 9906 / NCIMB 13794 / A6) (Arthrobacter chlorophenolicus).